The sequence spans 545 residues: Chaperonin GroEL (545 aa).

ATP is bound by residues 30 to 33 (TLGP), Lys51, 87 to 91 (DGTTT), Gly415, 479 to 481 (NAA), and Asp495.

This sequence belongs to the chaperonin (HSP60) family. As to quaternary structure, forms a cylinder of 14 subunits composed of two heptameric rings stacked back-to-back. Interacts with the co-chaperonin GroES.

The protein resides in the cytoplasm. The catalysed reaction is ATP + H2O + a folded polypeptide = ADP + phosphate + an unfolded polypeptide.. Its function is as follows. Together with its co-chaperonin GroES, plays an essential role in assisting protein folding. The GroEL-GroES system forms a nano-cage that allows encapsulation of the non-native substrate proteins and provides a physical environment optimized to promote and accelerate protein folding. The polypeptide is Chaperonin GroEL (Cellvibrio japonicus (strain Ueda107) (Pseudomonas fluorescens subsp. cellulosa)).